The chain runs to 270 residues: Formamidopyrimidine-DNA glycosylase (270 aa).

Catalysis depends on P2, which acts as the Schiff-base intermediate with DNA. E3 functions as the Proton donor in the catalytic mechanism. The active-site Proton donor; for beta-elimination activity is the K57. DNA contacts are provided by H90, R109, and K150. Residues 235 to 269 form an FPG-type zinc finger; it reads QIYGKKGCPCPKCGQKIESFTVGQRNSYVCLHCQK. R259 functions as the Proton donor; for delta-elimination activity in the catalytic mechanism.

Belongs to the FPG family. In terms of assembly, monomer. Zn(2+) serves as cofactor.

It carries out the reaction Hydrolysis of DNA containing ring-opened 7-methylguanine residues, releasing 2,6-diamino-4-hydroxy-5-(N-methyl)formamidopyrimidine.. It catalyses the reaction 2'-deoxyribonucleotide-(2'-deoxyribose 5'-phosphate)-2'-deoxyribonucleotide-DNA = a 3'-end 2'-deoxyribonucleotide-(2,3-dehydro-2,3-deoxyribose 5'-phosphate)-DNA + a 5'-end 5'-phospho-2'-deoxyribonucleoside-DNA + H(+). Involved in base excision repair of DNA damaged by oxidation or by mutagenic agents. Acts as a DNA glycosylase that recognizes and removes damaged bases. Has a preference for oxidized purines, such as 7,8-dihydro-8-oxoguanine (8-oxoG). Has AP (apurinic/apyrimidinic) lyase activity and introduces nicks in the DNA strand. Cleaves the DNA backbone by beta-delta elimination to generate a single-strand break at the site of the removed base with both 3'- and 5'-phosphates. This Actinobacillus succinogenes (strain ATCC 55618 / DSM 22257 / CCUG 43843 / 130Z) protein is Formamidopyrimidine-DNA glycosylase.